A 771-amino-acid chain; its full sequence is Transducin-like enhancer protein 3-B (771 aa).

The interval 1 to 141 is q domain; that stretch reads MYPQGRHPAP…PLTQQQLQAQ (141 aa). Positions 137 to 148 are enriched in low complexity; sequence QLQAQHLSHAAH. 2 disordered regions span residues 137–174 and 196–360; these read QLQA…GSGS and HHDL…MEAL. A GP domain region spans residues 142-209; the sequence is HLSHAAHGPP…EHRERESSTN (68 aa). Residues 196 to 206 are compositionally biased toward basic and acidic residues; the sequence is HHDLEHRERES. Over residues 207-217 the composition is skewed to low complexity; it reads STNNSVSPSDS. Residues 210–278 form a ccN domain region; sequence NSVSPSDSLR…TPRVSPSHSP (69 aa). Basic and acidic residues-rich tracts occupy residues 219–257 and 282–293; these read RASE…KSDD and GLDKARALKKDA. The Nuclear localization signal signature appears at 235-238; it reads KKRR. The SP domain stretch occupies residues 279 to 451; the sequence is PENGLDKARA…GGKPAYSFHV (173 aa). Residues 294–309 are compositionally biased toward low complexity; the sequence is PNSPASVASSGSTPSS. Ser-296 and Ser-299 each carry phosphoserine. Over residues 310 to 319 the composition is skewed to basic and acidic residues; sequence KAKDHPHNDK. A compositionally biased stretch (polar residues) spans 320–332; sequence SSTPGLKSNTPTP. 7 WD repeats span residues 483-521, 529-568, 573-612, 615-654, 656-695, 697-736, and 738-771; these read SHGE…SKSP, NRDN…PRIK, SSAP…LVRQ, GHTD…QLQQ, DFTS…KYQL, LHES…SIFQ, and KESS…EVIY.

It belongs to the WD repeat Groucho/TLE family. In terms of tissue distribution, at gastrulation, expression is absent within the axial mesoderm. After gastrulation is complete, expressed in the presomitic mesoderm, but expression in the tailbud doesn't begin until the six to seven somite stage, after which it becomes abundant. Expression is abundant throughout somitogenesis within the posterior half of the somites, but is absent from older somites. Also expressed in a dynamic manner within the neural plate.

The protein resides in the nucleus. Transcriptional corepressor that binds to a number of transcription factors. Inhibits the transcriptional activation mediated by CTNNB1 and TCF family members in Wnt signaling. The effects of full-length TLE family members may be modulated by association with dominant-negative AES. In Danio rerio (Zebrafish), this protein is Transducin-like enhancer protein 3-B.